The following is a 723-amino-acid chain: Zinc finger CCCH domain-containing protein 11A (723 aa).

C3H1-type zinc fingers lie at residues 2-29 (SKQGDDCYFYFYSTCNKGDNCPFRHCEA), 31-57 (LGNETICTLWKEGRCFRNVCRFRHMEI), and 60-87 (KRSEIPCFWENQPGGCQKSNCAFHHTKG). 5 disordered regions span residues 142-208 (ENSE…KQDD), 223-256 (KKQKEKTKKQSEGPSGVPAHPLQSRTVPVPEKEN), 404-428 (KRAEGERKKQRILPPSVPGKVKLEE), 450-526 (EKAL…VKSL), and 565-681 (VKPS…APLS). Acidic residues predominate over residues 160–175 (ADDDEDDDDQLSEEGE). Residues 376–411 (KTFSEALAERKQRRLEEEKQKLEEFLTEKRAEGERK) are a coiled coil. The span at 511–522 (PSNQSAPNSKAQ) shows a compositional bias: polar residues. The segment covering 609 to 620 (KKAALTAAPALP) has biased composition (low complexity). The segment covering 637–649 (LELQLGSQADSVE) has biased composition (polar residues). Over residues 650–672 (QSGDSSSASASSQSVAKAQQLSS) the composition is skewed to low complexity.

The protein localises to the nucleus speckle. Its function is as follows. Through its association with TREX complex components, may participate in the export and post-transcriptional coordination of selected mRNA transcripts. Binds RNA. The sequence is that of Zinc finger CCCH domain-containing protein 11A (ZC3H11A) from Gallus gallus (Chicken).